Here is a 259-residue protein sequence, read N- to C-terminus: Thiazole synthase (259 aa).

The active-site Schiff-base intermediate with DXP is the Lys95. 1-deoxy-D-xylulose 5-phosphate is bound by residues Gly156, 182–183 (AG), and 204–205 (AS).

The protein belongs to the ThiG family. Homotetramer. Forms heterodimers with either ThiH or ThiS.

The protein resides in the cytoplasm. The enzyme catalyses [ThiS sulfur-carrier protein]-C-terminal-Gly-aminoethanethioate + 2-iminoacetate + 1-deoxy-D-xylulose 5-phosphate = [ThiS sulfur-carrier protein]-C-terminal Gly-Gly + 2-[(2R,5Z)-2-carboxy-4-methylthiazol-5(2H)-ylidene]ethyl phosphate + 2 H2O + H(+). It functions in the pathway cofactor biosynthesis; thiamine diphosphate biosynthesis. Functionally, catalyzes the rearrangement of 1-deoxy-D-xylulose 5-phosphate (DXP) to produce the thiazole phosphate moiety of thiamine. Sulfur is provided by the thiocarboxylate moiety of the carrier protein ThiS. In vitro, sulfur can be provided by H(2)S. The protein is Thiazole synthase of Corynebacterium efficiens (strain DSM 44549 / YS-314 / AJ 12310 / JCM 11189 / NBRC 100395).